The sequence spans 255 residues: Proteasome subunit alpha 2 (255 aa).

The segment at Ala-229–Ser-255 is disordered. Residues Pro-238–Ala-249 are compositionally biased toward low complexity.

This sequence belongs to the peptidase T1A family. In terms of assembly, the 20S proteasome core is composed of 14 alpha and 14 beta subunits that assemble into four stacked heptameric rings, resulting in a barrel-shaped structure. The two inner rings, each composed of seven catalytic beta subunits, are sandwiched by two outer rings, each composed of seven alpha subunits. All four combinations of alpha- and beta-subunits (beta2-alpha1, beta2-alpha2, beta1-alpha2 and beta1-alpha1) yield fully assembled and proteolytically active proteasomes. The catalytic chamber with the active sites is on the inside of the barrel. Has probably a gated structure, the ends of the cylinder being occluded by the N-termini of the alpha-subunits. Is likely capped by the proteasome-associated ATPase, ARC. In terms of processing, the N-terminus is blocked.

Its subcellular location is the cytoplasm. It functions in the pathway protein degradation; proteasomal Pup-dependent pathway. The formation of the proteasomal ATPase ARC-20S proteasome complex, likely via the docking of the C-termini of ARC into the intersubunit pockets in the alpha-rings, may trigger opening of the gate for substrate entry. Interconversion between the open-gate and close-gate conformations leads to a dynamic regulation of the 20S proteasome proteolysis activity. Functionally, component of the proteasome core, a large protease complex with broad specificity involved in protein degradation. The R.erythropolis proteasomes are able to cleave oligopeptides after Tyr, Phe and Leu, very poorly after Arg but not after Glu. Thus, displays chymotrypsin-like activity, low trypsin-like activity but no caspase-like activity. The protein is Proteasome subunit alpha 2 of Rhodococcus erythropolis (Arthrobacter picolinophilus).